Here is a 430-residue protein sequence, read N- to C-terminus: Alpha-1,6-mannosyl-glycoprotein 2-beta-N-acetylglucosaminyltransferase (430 aa).

At 1–12 the chain is on the cytoplasmic side; it reads MANLWKKQRLRD. The chain crosses the membrane as a helical; Signal-anchor for type II membrane protein span at residues 13–35; it reads TGLCRLGILFAVTLSIVLMLVSV. Over 36 to 430 the chain is Lumenal; the sequence is PRTALNGSSI…YRYSSSSASP (395 aa). N-linked (GlcNAc...) asparagine glycans are attached at residues Asn41 and Asn61. Residues 104-108 and Asp135 each bind substrate; that span reads YVHNR. The cysteines at positions 177 and 188 are disulfide-linked. 205–209 contributes to the substrate binding site; that stretch reads SLKHH. Asp237 contacts Mn(2+). Residues Cys259 and Cys262 are joined by a disulfide bond. N-linked (GlcNAc...) asparagine glycosylation occurs at Asn295. The cysteines at positions 310 and 414 are disulfide-linked. His345 provides a ligand contact to Mn(2+).

The protein belongs to the glycosyltransferase 16 (GT16) protein family. Mn(2+) is required as a cofactor.

It localises to the golgi apparatus membrane. The catalysed reaction is an N(4)-{beta-D-GlcNAc-(1-&gt;2)-alpha-D-Man-(1-&gt;3)-[alpha-D-Man-(1-&gt;6)]-beta-D-Man-(1-&gt;4)-beta-D-GlcNAc-(1-&gt;4)-beta-D-GlcNAc}-L-asparaginyl-[protein] + UDP-N-acetyl-alpha-D-glucosamine = N(4)-{beta-D-GlcNAc-(1-&gt;2)-alpha-D-Man-(1-&gt;3)-[beta-D-GlcNAc-(1-&gt;2)-alpha-D-Man-(1-&gt;6)]-beta-D-Man-(1-&gt;4)-beta-D-GlcNAc-(1-&gt;4)-beta-D-GlcNAc}-L-asparaginyl-[protein] + UDP + H(+). It participates in protein modification; protein glycosylation. Catalyzes an essential step in the conversion of oligo-mannose and hybrid to complex N-glycans. This chain is Alpha-1,6-mannosyl-glycoprotein 2-beta-N-acetylglucosaminyltransferase, found in Arabidopsis thaliana (Mouse-ear cress).